The sequence spans 255 residues: Sugar fermentation stimulation protein homolog (255 aa).

This sequence belongs to the SfsA family.

The chain is Sugar fermentation stimulation protein homolog from Synechococcus sp. (strain WH7803).